A 363-amino-acid polypeptide reads, in one-letter code: MTALQNDTFLRALRRQPTEYTPLWLMRQAGRYLPEYNATRARAGSFLGLAKNPAYATEVTLQPLDRYPLDAAILFSDILTVPDAMGLGLSFAQGEGPRFARPLRTEADVQKLAVPDMASLQYVFDAVAEIRRALVQDGRQRVPLIGFSGSPWTLACYMVEGGGSDDFRTVKAMMYGRPDLMHRILDINAQAVSEYLNAQIEAGAQAVMIFDTWGGALADGMYQAFSLAYMRKVLAGLKREHDGQQIPAIVFTKGGGLWLEGLADTGADAIGLDWTVNLAQARRRTGGRVALQGNIDPTVLFAPEAAIREQVRGVLDSYAAAGGSDGHVFNLGHGISQFTPPESVAVLVDEVHRYSRQLRTSQG.

Residues 27-31, Asp77, Tyr157, Thr212, and His333 each bind substrate; that span reads RQAGR.

It belongs to the uroporphyrinogen decarboxylase family. Homodimer.

The protein resides in the cytoplasm. The enzyme catalyses uroporphyrinogen III + 4 H(+) = coproporphyrinogen III + 4 CO2. It participates in porphyrin-containing compound metabolism; protoporphyrin-IX biosynthesis; coproporphyrinogen-III from 5-aminolevulinate: step 4/4. Functionally, catalyzes the decarboxylation of four acetate groups of uroporphyrinogen-III to yield coproporphyrinogen-III. The protein is Uroporphyrinogen decarboxylase of Cupriavidus pinatubonensis (strain JMP 134 / LMG 1197) (Cupriavidus necator (strain JMP 134)).